A 470-amino-acid chain; its full sequence is Glutathione reductase (470 aa).

Ser-16 and Gly-17 together coordinate FAD. A glutathione-binding site is contributed by Ser-16. Residue Arg-23 participates in glutathione binding. FAD-binding residues include Glu-36, Thr-43, Cys-44, and Lys-52. Residues Cys-44 and Cys-49 are joined by a disulfide bond. Tyr-104 is a glutathione binding site. Ala-120 lines the FAD pocket. Positions 190, 193, 196, 213, and 219 each coordinate NADP(+). Thr-228 serves as a coordination point for glutathione. Gly-280 lines the NADP(+) pocket. Asp-321 contacts FAD. Residue Glu-327 coordinates NADP(+). Thr-329 is an FAD binding site. Arg-337 contributes to the glutathione binding site. Ala-362 contacts NADP(+). Lys-412 is a glutathione binding site. His-459 serves as a coordination point for FAD. The Proton acceptor role is filled by His-459.

It belongs to the class-I pyridine nucleotide-disulfide oxidoreductase family. As to quaternary structure, homodimer. Requires FAD as cofactor.

It localises to the cytoplasm. Its subcellular location is the mitochondrion. It catalyses the reaction 2 glutathione + NADP(+) = glutathione disulfide + NADPH + H(+). In terms of biological role, catalyzes the reduction of glutathione disulfide (GSSG) to reduced glutathione (GSH). Constitutes the major mechanism to maintain a high GSH:GSSG ratio in the cytosol. The chain is Glutathione reductase (GLR1) from Yarrowia lipolytica (strain CLIB 122 / E 150) (Yeast).